The primary structure comprises 497 residues: NADH-quinone oxidoreductase subunit N (497 aa).

A run of 14 helical transmembrane segments spans residues 14–34 (LMAM…MLSI), 45–65 (SLTV…WGLF), 86–106 (IFYS…AYPW), 116–136 (EFYL…SAQH), 137–157 (LAAV…LLGY), 171–191 (YFVL…MLYA), 215–235 (ILAG…LVPF), 253–273 (FLGT…FLYV), 281–301 (LNTA…LMAL), 309–329 (LLGY…IALH), 338–358 (VAVY…VVSL), 385–405 (AAVM…LGFI), 420–439 (WVLT…YYLR), and 461–481 (AFTA…VFGI).

Belongs to the complex I subunit 2 family. In terms of assembly, NDH-1 is composed of 13 different subunits. Subunits NuoA, H, J, K, L, M, N constitute the membrane sector of the complex.

Its subcellular location is the cell membrane. The catalysed reaction is a quinone + NADH + 5 H(+)(in) = a quinol + NAD(+) + 4 H(+)(out). Its function is as follows. NDH-1 shuttles electrons from NADH, via FMN and iron-sulfur (Fe-S) centers, to quinones in the respiratory chain. The immediate electron acceptor for the enzyme in this species is believed to be ubiquinone. Couples the redox reaction to proton translocation (for every two electrons transferred, four hydrogen ions are translocated across the cytoplasmic membrane), and thus conserves the redox energy in a proton gradient. The chain is NADH-quinone oxidoreductase subunit N from Hamiltonella defensa subsp. Acyrthosiphon pisum (strain 5AT).